The primary structure comprises 436 residues: Sarcosine reductase complex component B subunit beta (436 aa).

U350 is a catalytic residue. Residue U350 is a non-standard amino acid, selenocysteine.

It belongs to the GrdB/GrdF/GrdH family. Heterotetramer of two alpha and two beta subunits. Component of the sarcosine reductase complex, together with components A and C. PB is substrate specific.

The catalysed reaction is acetyl phosphate + methylamine + [thioredoxin]-disulfide + H2O = sarcosine + [thioredoxin]-dithiol + phosphate + H(+). Its function is as follows. In the first step of sarcosine reductase, the substrate is bound to component PB via a Schiff base intermediate. Then the PB-activated substrate is nucleophilically attacked by the selenol anion of component PA to transform it to a carboxymethylated selenoether and the respective amine. By action of component PC, acetyl phosphate is formed, leaving component PA in its oxidized state. Finally component PA becomes reduced by the thioredoxin system to start a new catalytic cycle of reductive deamination. This Peptoclostridium acidaminophilum (Eubacterium acidaminophilum) protein is Sarcosine reductase complex component B subunit beta (grdF).